The primary structure comprises 291 residues: Aliphatic sulfonates import ATP-binding protein SsuB 2 (291 aa).

Residues 26–247 (LRVRGIAKRY…APGLPALASI (222 aa)) form the ABC transporter domain. 58–65 (GRSGCGKS) is an ATP binding site. Residues 264–291 (PAAPKAQTRHGPPRGATAQDTSPLQRIL) form a disordered region. A compositionally biased stretch (polar residues) spans 281–291 (AQDTSPLQRIL).

The protein belongs to the ABC transporter superfamily. Aliphatic sulfonates importer (TC 3.A.1.17.2) family. In terms of assembly, the complex is composed of two ATP-binding proteins (SsuB), two transmembrane proteins (SsuC) and a solute-binding protein (SsuA).

Its subcellular location is the cell inner membrane. The catalysed reaction is ATP + H2O + aliphatic sulfonate-[sulfonate-binding protein]Side 1 = ADP + phosphate + aliphatic sulfonateSide 2 + [sulfonate-binding protein]Side 1.. Functionally, part of the ABC transporter complex SsuABC involved in aliphatic sulfonates import. Responsible for energy coupling to the transport system. The sequence is that of Aliphatic sulfonates import ATP-binding protein SsuB 2 from Xanthomonas axonopodis pv. citri (strain 306).